Reading from the N-terminus, the 719-residue chain is ATP-dependent RNA helicase p62 (719 aa).

The disordered stretch occupies residues 94 to 234; it reads AQSQRAFRDS…GSQDLPMRPV (141 aa). 2 stretches are compositionally biased toward basic and acidic residues: residues 99-108 and 137-171; these read AFRDSSKPDS and EEIK…DRRG. Over residues 172–188 the composition is skewed to gly residues; it reads GGGGGNRFGGGGGGGDY. The segment covering 194–205 has biased composition (basic and acidic residues); that stretch reads GRVEKRRDDRGG. Residues 206-226 are compositionally biased toward gly residues; sequence GNRFGGGGGFGDRRGGGGGGS. The Q motif motif lies at 281 to 309; the sequence is QDFSEVHLPDYVMKEIRRQGYKAPTAIQA. The 176-residue stretch at 312 to 487 folds into the Helicase ATP-binding domain; the sequence is WPIAMSGSNF…EDFLGNYIQI (176 aa). Residue 325–332 coordinates ATP; sequence AKTGSGKT. Positions 435–438 match the DEAD box motif; sequence DEAD. The Helicase C-terminal domain maps to 519 to 664; it reads LLSDIYDTSE…EINPALENLA (146 aa). Positions 689 to 719 are disordered; the sequence is GGGFKKGSLSNGRGFGGGGGGGGEGRHSRFD. Positions 701–711 are enriched in gly residues; sequence RGFGGGGGGGG.

The protein belongs to the DEAD box helicase family. DDX5/DBP2 subfamily. In terms of assembly, interacts with Fmr1 to form the RNA-induced silencing complex (RISC), a ribonucleoprotein (RNP) complex involved in translation regulation, other components of the complex are RpL5, RpL11, AGO2 and Dcr-1.

It is found in the nucleus. It localises to the nucleolus. Its subcellular location is the cytoplasm. The protein resides in the cytosol. It carries out the reaction ATP + H2O = ADP + phosphate + H(+). Functionally, as an RNA helicase, unwinds RNA and alters RNA structures through ATP binding and hydrolysis. Involved in multiple cellular processes, including pre-mRNA splicing, alternative splicing, rRNA processing and miRNA processing, as well as transcription regulation. Plays a role in innate immunity. Specifically restricts bunyavirus infection, including Rift Valley fever virus (RVFV) or La Crosse virus (LACV), but not vesicular stomatitis virus (VSV), in an interferon- and DROSHA-independent manner. The chain is ATP-dependent RNA helicase p62 (Rm62) from Drosophila melanogaster (Fruit fly).